We begin with the raw amino-acid sequence, 75 residues long: UPF0270 protein PSPTO_1630 (75 aa).

This sequence belongs to the UPF0270 family.

In Pseudomonas syringae pv. tomato (strain ATCC BAA-871 / DC3000), this protein is UPF0270 protein PSPTO_1630.